Here is a 286-residue protein sequence, read N- to C-terminus: ATP phosphoribosyltransferase (286 aa).

Belongs to the ATP phosphoribosyltransferase family. Long subfamily. Requires Mg(2+) as cofactor.

The protein resides in the cytoplasm. The catalysed reaction is 1-(5-phospho-beta-D-ribosyl)-ATP + diphosphate = 5-phospho-alpha-D-ribose 1-diphosphate + ATP. It participates in amino-acid biosynthesis; L-histidine biosynthesis; L-histidine from 5-phospho-alpha-D-ribose 1-diphosphate: step 1/9. Its activity is regulated as follows. Feedback inhibited by histidine. Catalyzes the condensation of ATP and 5-phosphoribose 1-diphosphate to form N'-(5'-phosphoribosyl)-ATP (PR-ATP). Has a crucial role in the pathway because the rate of histidine biosynthesis seems to be controlled primarily by regulation of HisG enzymatic activity. This is ATP phosphoribosyltransferase from Arthrobacter sp. (strain FB24).